Consider the following 30-residue polypeptide: Thrombin-like enzyme LmrSP-2 (30 aa).

It belongs to the peptidase S1 family. Snake venom subfamily. In terms of tissue distribution, expressed by the venom gland.

The protein localises to the secreted. Its function is as follows. Thrombin-like snake venom serine protease that cleaves alpha-chain of fibrinogen (FGA) releases only fibrinopeptide A. Shows coagulant, esterase and amidase activities. The protein is Thrombin-like enzyme LmrSP-2 of Lachesis muta rhombeata (Bushmaster).